We begin with the raw amino-acid sequence, 202 residues long: Transmembrane 4 L6 family member 1 (202 aa).

Residues 1–9 (MCYGKCARC) lie on the Cytoplasmic side of the membrane. Residues 10 to 30 (IGHSLVGLALLCIAANILLYF) traverse the membrane as a helical segment. Over 31 to 49 (PNGETKYASENHLSRFVWF) the chain is Extracellular. A helical membrane pass occupies residues 50–70 (FSGIVGGGLLMLLPAFVFIGL). The Cytoplasmic portion of the chain corresponds to 71-93 (EQDDCCGCCGHENCGKRCAMLSS). The chain crosses the membrane as a helical span at residues 94-114 (VLAALIGIAGSGYCVIVAALG). At 115-161 (LAEGPLCLDSLGQWNYTFASTEGQYLLDTSTWSECTEPKHIVEWNVS) the chain is on the extracellular side. N129 and N159 each carry an N-linked (GlcNAc...) asparagine glycan. Residues 162–182 (LFSILLALGGIEFILCLIQVI) form a helical membrane-spanning segment. Topologically, residues 183–202 (NGVLGGICGFCCSHQQQYDC) are cytoplasmic.

This sequence belongs to the L6 tetraspanin family. In terms of assembly, present in high molecular weight complexes in tumor cells. Interacts with SDCBP2. In terms of tissue distribution, highly expressed in lung, breast, colon and ovarian carcinomas. It is also present on some normal cells, endothelial cells in particular.

Its subcellular location is the membrane. The protein is Transmembrane 4 L6 family member 1 (TM4SF1) of Homo sapiens (Human).